The sequence spans 112 residues: Divalent-cation tolerance protein CutA (112 aa).

Cu cation-binding residues include C16, H83, and H84.

Belongs to the CutA family. Homotrimer. Requires Cu cation as cofactor.

The protein resides in the cytoplasm. Functionally, involved in resistance toward heavy metals. The protein is Divalent-cation tolerance protein CutA of Escherichia coli O81 (strain ED1a).